Reading from the N-terminus, the 104-residue chain is MSARMFVLCCIWFIVAFLWITITSALDKEWMIDGRGINNVCDVLMYLEEDDTRDVGVIMTLPLFFPFLWFALWRKKRGWFMYATALAIFGYWLWQFFLRYQFCL.

The Cytoplasmic portion of the chain corresponds to 1 to 5 (MSARM). A helical membrane pass occupies residues 6–26 (FVLCCIWFIVAFLWITITSAL). The Periplasmic segment spans residues 27-52 (DKEWMIDGRGINNVCDVLMYLEEDDT). Residues 53–73 (RDVGVIMTLPLFFPFLWFALW) traverse the membrane as a helical segment. Topologically, residues 74–77 (RKKR) are cytoplasmic. The chain crosses the membrane as a helical span at residues 78-98 (GWFMYATALAIFGYWLWQFFL). Residues 99 to 104 (RYQFCL) lie on the Periplasmic side of the membrane.

It is found in the cell inner membrane. The sequence is that of Inner membrane protein YjeO (yjeO) from Escherichia coli (strain K12).